The following is a 609-amino-acid chain: Glutamine--fructose-6-phosphate aminotransferase [isomerizing] (609 aa).

The active-site Nucleophile; for GATase activity is C2. Positions 2-217 (CGIVGAIAGR…EGDTAELRRD (216 aa)) constitute a Glutamine amidotransferase type-2 domain. 2 consecutive SIS domains span residues 284–425 (TADA…LQGR) and 458–599 (WAER…VDKP). The active-site For Fru-6P isomerization activity is the K604.

In terms of assembly, homodimer.

The protein localises to the cytoplasm. It carries out the reaction D-fructose 6-phosphate + L-glutamine = D-glucosamine 6-phosphate + L-glutamate. Functionally, catalyzes the first step in hexosamine metabolism, converting fructose-6P into glucosamine-6P using glutamine as a nitrogen source. The protein is Glutamine--fructose-6-phosphate aminotransferase [isomerizing] of Xanthomonas campestris pv. campestris (strain ATCC 33913 / DSM 3586 / NCPPB 528 / LMG 568 / P 25).